Reading from the N-terminus, the 326-residue chain is 5,10-methylenetetrahydromethanopterin reductase (326 aa).

It belongs to the mer family.

The protein resides in the cytoplasm. The catalysed reaction is 5-methyl-5,6,7,8-tetrahydromethanopterin + oxidized coenzyme F420-(gamma-L-Glu)(n) + H(+) = 5,10-methylenetetrahydromethanopterin + reduced coenzyme F420-(gamma-L-Glu)(n). It participates in one-carbon metabolism; methanogenesis from CO(2); methyl-coenzyme M from 5,10-methylene-5,6,7,8-tetrahydromethanopterin: step 1/2. Its function is as follows. Catalyzes the reversible reduction of methylene-H(4)MPT to methyl-H(4)MPT. This chain is 5,10-methylenetetrahydromethanopterin reductase, found in Methanolobus tindarius.